We begin with the raw amino-acid sequence, 122 residues long: Large ribosomal subunit protein uL14 (122 aa).

It belongs to the universal ribosomal protein uL14 family. As to quaternary structure, part of the 50S ribosomal subunit. Forms a cluster with proteins L3 and L19. In the 70S ribosome, L14 and L19 interact and together make contacts with the 16S rRNA in bridges B5 and B8.

In terms of biological role, binds to 23S rRNA. Forms part of two intersubunit bridges in the 70S ribosome. In Azoarcus sp. (strain BH72), this protein is Large ribosomal subunit protein uL14.